The sequence spans 124 residues: MTETNQIFRCNVCGNIVEVLNPGAGQLVCCNQPMELLVARRTDVGPEKHVPVVEETGTGIRVKVGEVPHPMEENHHIQWIEVIAGDMVYRKDLNPGDNPEAEFPVEMASDFMVRIYCNIHGLWY.

The Fe cation site is built by C10, C13, C29, C30, H49, H69, H75, C117, and H120.

Belongs to the desulfoferrodoxin family. It depends on Fe(3+) as a cofactor. Cu(2+) is required as a cofactor.

In Methanothermobacter thermautotrophicus (strain ATCC 29096 / DSM 1053 / JCM 10044 / NBRC 100330 / Delta H) (Methanobacterium thermoautotrophicum), this protein is Desulfoferrodoxin homolog.